An 888-amino-acid chain; its full sequence is Microtubule-associated protein 10 (888 aa).

Disordered regions lie at residues 398–454 (EHKG…VTKG), 508–602 (SLAA…TSLR), 620–642 (NILR…DPAV), 654–683 (QVKA…ELQC), and 699–836 (TENN…YEPS). The segment covering 524–541 (LTDSNGKVSSWAVQSQLP) has biased composition (polar residues). Over residues 572-589 (ESSRTREAKQSHAMKKET) the composition is skewed to basic and acidic residues. The span at 590–600 (VGQSENKTVTS) shows a compositional bias: polar residues. Polar residues-rich tracts occupy residues 661 to 683 (ADTN…ELQC), 699 to 714 (TENN…SSTG), 722 to 745 (SWAS…SSVF), 772 to 786 (EASS…SQWT), and 825 to 836 (ARTSQVSSYEPS).

Interacts (via middle region) with microtubules.

The protein localises to the cytoplasm. It is found in the cytoskeleton. The protein resides in the spindle pole. Its subcellular location is the microtubule organizing center. It localises to the centrosome. The protein localises to the midbody. Microtubule-associated protein (MAP) that plays a role in the regulation of cell division; promotes microtubule stability and participates in the organization of the spindle midzone and normal progress of cytokinesis. The sequence is that of Microtubule-associated protein 10 (Map10) from Rattus norvegicus (Rat).